A 557-amino-acid polypeptide reads, in one-letter code: Anthrax toxin receptor-like (557 aa).

A signal peptide spans 1–25 (MRSHGRWGPCFLLFLLLLPPPLFRA). At 26 to 345 (GSLRYHGPGW…KSNVSVTSST (320 aa)) the chain is on the extracellular side. The 171-residue stretch at 74-244 (DLYFILDKSG…KAMRDTVDAL (171 aa)) folds into the VWFA domain. Residues Ser82, Ser84, and Thr148 each contribute to the a divalent metal cation site. Residues 346-366 (CGIFSNWLYFLLPLLLLPLLL) form a helical membrane-spanning segment. At 367-557 (CCLWRLCRKK…PTSKAPNTQD (191 aa)) the chain is on the cytoplasmic side. 2 disordered regions span residues 380 to 411 (EPPP…LPPP) and 497 to 557 (ESPS…NTQD). The segment covering 386 to 395 (KPEKEPEQEK) has biased composition (basic and acidic residues). A compositionally biased stretch (pro residues) spans 396-411 (PPPPPPPSPPPPLPPP). Residues 534–557 (GTLQNPLCPSLPRSPTSKAPNTQD) are compositionally biased toward polar residues.

This sequence belongs to the ATR family.

It is found in the membrane. The chain is Anthrax toxin receptor-like (ANTXRL) from Macaca fascicularis (Crab-eating macaque).